Here is a 31-residue protein sequence, read N- to C-terminus: uncharacterized protein (31 aa).

A helical membrane pass occupies residues T7 to W29.

The protein resides in the cell inner membrane. This is an uncharacterized protein from Escherichia coli (strain K12).